The following is a 190-amino-acid chain: Protein GrpE (190 aa).

The segment at 1–33 is disordered; the sequence is MSEQEKDQNNAEPQVETVEEQQAAAAAEAVEPT. A compositionally biased stretch (low complexity) spans 11–32; the sequence is AEPQVETVEEQQAAAAAEAVEP.

The protein belongs to the GrpE family. As to quaternary structure, homodimer.

The protein localises to the cytoplasm. Participates actively in the response to hyperosmotic and heat shock by preventing the aggregation of stress-denatured proteins, in association with DnaK and GrpE. It is the nucleotide exchange factor for DnaK and may function as a thermosensor. Unfolded proteins bind initially to DnaJ; upon interaction with the DnaJ-bound protein, DnaK hydrolyzes its bound ATP, resulting in the formation of a stable complex. GrpE releases ADP from DnaK; ATP binding to DnaK triggers the release of the substrate protein, thus completing the reaction cycle. Several rounds of ATP-dependent interactions between DnaJ, DnaK and GrpE are required for fully efficient folding. In Alcanivorax borkumensis (strain ATCC 700651 / DSM 11573 / NCIMB 13689 / SK2), this protein is Protein GrpE.